The following is a 149-amino-acid chain: Nucleoside diphosphate kinase (149 aa).

Positions 9, 57, 85, 91, 102, and 112 each coordinate ATP. His-115 acts as the Pros-phosphohistidine intermediate in catalysis.

The protein belongs to the NDK family. As to quaternary structure, homotetramer. Mg(2+) is required as a cofactor.

The protein resides in the cytoplasm. It carries out the reaction a 2'-deoxyribonucleoside 5'-diphosphate + ATP = a 2'-deoxyribonucleoside 5'-triphosphate + ADP. The catalysed reaction is a ribonucleoside 5'-diphosphate + ATP = a ribonucleoside 5'-triphosphate + ADP. Major role in the synthesis of nucleoside triphosphates other than ATP. The ATP gamma phosphate is transferred to the NDP beta phosphate via a ping-pong mechanism, using a phosphorylated active-site intermediate. In Synechocystis sp. (strain ATCC 27184 / PCC 6803 / Kazusa), this protein is Nucleoside diphosphate kinase.